A 1256-amino-acid polypeptide reads, in one-letter code: Octopamine receptor beta-3R (1256 aa).

The Extracellular segment spans residues 1–143; that stretch reads MSGVNVADLL…LDLSLLLLKG (143 aa). N36, N113, and N117 each carry an N-linked (GlcNAc...) asparagine glycan. A helical transmembrane segment spans residues 144–164; sequence FIFSSIILAAVLGNALVIISV. The Cytoplasmic portion of the chain corresponds to 165–171; that stretch reads QRNRKLR. A helical membrane pass occupies residues 172–192; the sequence is VITNYFVVSLAMADMLVALCA. Residues 193-213 lie on the Extracellular side of the membrane; sequence MTFNASVELSGGKWMFGPFMC. N-linked (GlcNAc...) asparagine glycosylation is present at N196. Residues 214–236 form a helical membrane-spanning segment; the sequence is NVYNSLDVYFSTASILHLCCISV. Residues 237–258 are Cytoplasmic-facing; sequence DRYYAIVRPLEYPLNMTHKTVC. Residues 259–279 form a helical membrane-spanning segment; sequence FMLANVWILPALISFTPIFLG. Over 280 to 305 the chain is Extracellular; sequence WYTTEEHLREISLHPDQCSFVVNKAY. Residues 306–326 form a helical membrane-spanning segment; it reads ALISSSVSFWIPGIVMLVMYW. Residues 327 to 1169 are Cytoplasmic-facing; the sequence is RIFKEAIRQR…WKAEHKAART (843 aa). 5 disordered regions span residues 377–427, 480–512, 665–698, 751–774, and 1087–1117; these read AREE…DLRD, ELDK…ESTA, LSHS…NKPD, GESP…EPSG, and DTTV…SSTR. A compositionally biased stretch (acidic residues) spans 396–406; it reads TDEDDDRDECD. Polar residues predominate over residues 489-498; sequence NGPQQQLSLT. Positions 757-770 are enriched in pro residues; that stretch reads PATPPPSLSPPELP. The helical transmembrane segment at 1170 to 1190 threads the bilayer; it reads LGIIMGVFLLCWLPFFLWYVI. The Extracellular portion of the chain corresponds to 1191-1202; sequence TSLCGPACPCPD. Residues 1203–1223 form a helical membrane-spanning segment; it reads VLVVVLFWIGYFNSTLNPLIY. The Cytoplasmic segment spans residues 1224-1256; it reads AYFNRDFREAFRNTLECVLPCLEKRNPYNAYYV.

Belongs to the G-protein coupled receptor 1 family. As to expression, in the adult, expressed in the inferior and superior protocerebrum, the posterior lateral protocerebrum, the deutocerebrum, the surface of the subesophageal ganglion, the lateral cell body region, the cortical layer of the ventral nerve cord and the optic lobe medulla of the central nervous system (CNS). Also expressed in the nurse cells and follicle cells of the egg chambers in the ovary at oogenic stages 1-10, and spermatogonia and spermatocytes in the testis. Expressed ubiquitously in the embryonic CNS. In larvae, expressed in the ventral cortical layer of the ventral nerve cord, the cortical layer of the brain lobes, salivary glands, midgut, imaginal disks and developing reproductive organs. Expressed in the larval prothoracic gland with weak expression in other regions of the ring gland.

The protein localises to the cell membrane. Autoreceptor for octopamine, which is a neurotransmitter, neurohormone, and neuromodulator in invertebrates. Probably also acts as a receptor for tyramine during ecdysone biosynthesis. Required for the biosynthesis of the steroid hormone ecdysone which is necessary for metamorphosis. Involved in activation of prothoracicotropic hormone and insulin-like peptide signaling which is required for the expression of ecdysone biosynthetic genes. In Drosophila melanogaster (Fruit fly), this protein is Octopamine receptor beta-3R.